We begin with the raw amino-acid sequence, 264 residues long: Thymidylate synthase (264 aa).

Arg21 provides a ligand contact to dUMP. His51 lines the (6R)-5,10-methylene-5,6,7,8-tetrahydrofolate pocket. DUMP is bound at residue 126–127 (RR). The Nucleophile role is filled by Cys146. Residues 166 to 169 (RSAD), Asn177, and 207 to 209 (HIY) each bind dUMP. A (6R)-5,10-methylene-5,6,7,8-tetrahydrofolate-binding site is contributed by Asp169. Ala263 provides a ligand contact to (6R)-5,10-methylene-5,6,7,8-tetrahydrofolate.

It belongs to the thymidylate synthase family. Bacterial-type ThyA subfamily. Homodimer.

The protein localises to the cytoplasm. It carries out the reaction dUMP + (6R)-5,10-methylene-5,6,7,8-tetrahydrofolate = 7,8-dihydrofolate + dTMP. It functions in the pathway pyrimidine metabolism; dTTP biosynthesis. Its function is as follows. Catalyzes the reductive methylation of 2'-deoxyuridine-5'-monophosphate (dUMP) to 2'-deoxythymidine-5'-monophosphate (dTMP) while utilizing 5,10-methylenetetrahydrofolate (mTHF) as the methyl donor and reductant in the reaction, yielding dihydrofolate (DHF) as a by-product. This enzymatic reaction provides an intracellular de novo source of dTMP, an essential precursor for DNA biosynthesis. This is Thymidylate synthase from Rhizobium meliloti (strain 1021) (Ensifer meliloti).